A 71-amino-acid polypeptide reads, in one-letter code: Large ribosomal subunit protein uL29 (71 aa).

It belongs to the universal ribosomal protein uL29 family.

In Methanocella arvoryzae (strain DSM 22066 / NBRC 105507 / MRE50), this protein is Large ribosomal subunit protein uL29.